The sequence spans 418 residues: Pigment epithelium-derived factor (418 aa).

The signal sequence occupies residues 1–19 (MQALVLLLCIGALLGHSSC). At glutamine 20 the chain carries Pyrrolidone carboxylic acid. The interval 20-39 (QNPASPPEEGSPDPDSTGAL) is disordered. Phosphoserine; by CK2 is present on residues serine 24 and serine 114. A Phosphoserine; by PKA modification is found at serine 227. Residue asparagine 285 is glycosylated (N-linked (GlcNAc...) (complex) asparagine). An O-glycosylated at one site region spans residues 371–383 (TTPSPGLQPAHLT).

The protein belongs to the serpin family. As to quaternary structure, interacts with PNPLA2; this interaction stimulates the phospholipase A2 activity of PNPLA2. The N-terminus is blocked. Extracellular phosphorylation enhances antiangiogenic activity. Post-translationally, N- and O-glycosylated. O-glycosylated with a core 1 or possibly core 8 glycan. As to expression, retinal pigment epithelial cells and blood plasma.

It localises to the secreted. The protein resides in the melanosome. Neurotrophic protein; induces extensive neuronal differentiation in retinoblastoma cells. Potent inhibitor of angiogenesis. As it does not undergo the S (stressed) to R (relaxed) conformational transition characteristic of active serpins, it exhibits no serine protease inhibitory activity. The sequence is that of Pigment epithelium-derived factor (SERPINF1) from Homo sapiens (Human).